The sequence spans 366 residues: MPMISVLGKMFLWQREGPGGRWTCQTSRRVSSDPAWAVEWIELPRGLSLSSLGSARTLRGWSRSSRPSSVDSQDLPEVNVGDTVAMLPKSRRALTIQEIAALARSSLHGISQVVKDHVTKPTAMAQGRVAHLIEWKGWSKPSDSPAALESAFSSYSDLSEGEQEARFAAGVAEQFAIAEAKLRAWSSVDGEDSTDDSYDEDFAGGMDTDMAGQLPLGPHLQDLFTGHRFSRPVRQGSVEPESDCSQTVSPDTLCSSLCSLEDGLLGSPARLASQLLGDELLLAKLPPSRESAFRSLGPLEAQDSLYNSPLTESCLSPAEEEPAPCKDCQPLCPPLTGSWERQRQASDLASSGVVSLDEDEAEPEEQ.

Positions 342–366 are disordered; that stretch reads QRQASDLASSGVVSLDEDEAEPEEQ. A compositionally biased stretch (acidic residues) spans 356–366; sequence LDEDEAEPEEQ.

The protein belongs to the FAM131 family.

The chain is Protein FAM131A (FAM131A) from Homo sapiens (Human).